Here is a 271-residue protein sequence, read N- to C-terminus: MKSYHPKSLLNDLQYYITPPHDCSYLENKSARMVFLDPIHRIDVVTLSELSRLGFRRSGDFVYRPECHLCRQCLSCRVPVADFQMNSMQKKAWKRNQDLTMTVLPTRQASQIHYDLYERYINERHADGDMFPPSLDQFEKFLVHSCTDSFFLELWKDNRLISVSTCDLMDDGLSAVYTFFDPDEHRRSLGVYSILNQIEYVKTLGLEYVYLGYWVPHSAKMNYKSQYTPLELLLDGQWRRLNRSLSPEEINQLGNSLMTTLPSEWNNLIIK.

The protein belongs to the R-transferase family. Bpt subfamily.

It localises to the cytoplasm. It carries out the reaction N-terminal L-glutamyl-[protein] + L-leucyl-tRNA(Leu) = N-terminal L-leucyl-L-glutamyl-[protein] + tRNA(Leu) + H(+). The enzyme catalyses N-terminal L-aspartyl-[protein] + L-leucyl-tRNA(Leu) = N-terminal L-leucyl-L-aspartyl-[protein] + tRNA(Leu) + H(+). Functionally, functions in the N-end rule pathway of protein degradation where it conjugates Leu from its aminoacyl-tRNA to the N-termini of proteins containing an N-terminal aspartate or glutamate. The protein is Aspartate/glutamate leucyltransferase of Acinetobacter baumannii (strain SDF).